A 288-amino-acid polypeptide reads, in one-letter code: Cell division protein ZipA (288 aa).

A topological domain (periplasmic) is located at residue Met-1. The helical transmembrane segment at 2-22 threads the bilayer; the sequence is EIGLREWLIVIGIIVIAGILF. At 23–288 the chain is on the cytoplasmic side; the sequence is DGWRRMRGGK…ERRALTQRRG (266 aa). The interval 48-138 is disordered; sequence DEEETTSAEV…DDKPAQRITE (91 aa). Basic and acidic residues-rich tracts occupy residues 64-77, 85-105, and 122-138; these read LDTHKEPQLDEHDL, RDNKRGAGSEKRGDKKRKDEP, and ARDDDFPDDKPAQRITE.

The protein belongs to the ZipA family. In terms of assembly, interacts with FtsZ via their C-terminal domains.

The protein resides in the cell inner membrane. Essential cell division protein that stabilizes the FtsZ protofilaments by cross-linking them and that serves as a cytoplasmic membrane anchor for the Z ring. Also required for the recruitment to the septal ring of downstream cell division proteins. This is Cell division protein ZipA from Pseudomonas syringae pv. tomato (strain ATCC BAA-871 / DC3000).